A 380-amino-acid chain; its full sequence is Glucose-1-phosphate adenylyltransferase (380 aa).

Alpha-D-glucose 1-phosphate contacts are provided by residues glycine 164, 179-180 (EK), and serine 190.

It belongs to the bacterial/plant glucose-1-phosphate adenylyltransferase family. As to quaternary structure, homotetramer.

It carries out the reaction alpha-D-glucose 1-phosphate + ATP + H(+) = ADP-alpha-D-glucose + diphosphate. It participates in glycan biosynthesis; glycogen biosynthesis. In terms of biological role, involved in the biosynthesis of ADP-glucose, a building block required for the elongation reactions to produce glycogen. Catalyzes the reaction between ATP and alpha-D-glucose 1-phosphate (G1P) to produce pyrophosphate and ADP-Glc. This Streptococcus pneumoniae (strain 70585) protein is Glucose-1-phosphate adenylyltransferase.